The following is a 204-amino-acid chain: Factor arrest protein 3 (204 aa).

In terms of assembly, component of a complex at least composed of FAR3, FAR7, FAR8, FAR10, FAR11 and VPS64.

Its subcellular location is the endoplasmic reticulum. In terms of biological role, participates in the control of the reentry into the cell cycle following pheromone treatment. This chain is Factor arrest protein 3 (FAR3), found in Saccharomyces cerevisiae (strain ATCC 204508 / S288c) (Baker's yeast).